The sequence spans 271 residues: MTLLTVKHLTITDTWTDQPLVSDVNFTLTKGETLGVIGESGSGKSITCKSIIGLNPERLGVTGEIIFDGTSMLSLSESQLKKYRGKDIAMVMQQGSRAFDPSTTVGKQMFETMKVHTSMSTQEIEKTLIEYMDYLSLKDPKRILKSYPYMLSGGMLQRLMIALALALKPKLIIADEPTTALDTITQYDVLEAFIDIKKHFDCAMIFISHDLTVINKIADRVVVMKNGQLIEQGTRESVLHHPEHVYTKYLLSTKKKINDHFKHVMRGDVHD.

An ABC transporter domain is found at Val-6–Leu-251. Gly-38–Ser-45 is a binding site for ATP.

Belongs to the ABC transporter superfamily. As to quaternary structure, the complex is composed of two ATP-binding proteins (CntD and CntF), two transmembrane proteins (CntB and CntC) and a solute-binding protein (CntA).

The protein localises to the cell membrane. Its activity is regulated as follows. Nickel/cobalt import is reduced in the presence of zinc. Its function is as follows. Part of the ABC transporter complex CntABCDF (Opp1) involved in the uptake of metal in complex with the metallophore staphylopine (StP). Involved in the import of divalent metals ions such as nickel, cobalt and zinc. Probably responsible for energy coupling to the transport system. Plays a major role in nickel/cobalt import in zinc-depleted conditions. Contributes to virulence. Required for full urease activity in vitro. This Staphylococcus aureus (strain NCTC 8325 / PS 47) protein is Metal-staphylopine import system ATP-binding protein CntD.